We begin with the raw amino-acid sequence, 283 residues long: Bis(5'-nucleosyl)-tetraphosphatase, symmetrical (283 aa).

It belongs to the Ap4A hydrolase family.

It carries out the reaction P(1),P(4)-bis(5'-adenosyl) tetraphosphate + H2O = 2 ADP + 2 H(+). Hydrolyzes diadenosine 5',5'''-P1,P4-tetraphosphate to yield ADP. This chain is Bis(5'-nucleosyl)-tetraphosphatase, symmetrical, found in Cronobacter sakazakii (strain ATCC BAA-894) (Enterobacter sakazakii).